A 39-amino-acid chain; its full sequence is Cytochrome b559 subunit beta (39 aa).

The chain crosses the membrane as a helical span at residues 14 to 30 (WLAIHGLAVPTVFFLGS). Heme is bound at residue His18.

As to quaternary structure, heterodimer of an alpha subunit and a beta subunit. PSII is composed of 1 copy each of membrane proteins PsbA, PsbB, PsbC, PsbD, PsbE, PsbF, PsbH, PsbI, PsbJ, PsbK, PsbL, PsbM, PsbT, PsbX, PsbY, PsbZ, Psb30/Ycf12, at least 3 peripheral proteins of the oxygen-evolving complex and a large number of cofactors. It forms dimeric complexes. Heme b is required as a cofactor. Post-translationally, the N-terminus is blocked.

It localises to the plastid. It is found in the chloroplast thylakoid membrane. This b-type cytochrome is tightly associated with the reaction center of photosystem II (PSII). PSII is a light-driven water:plastoquinone oxidoreductase that uses light energy to abstract electrons from H(2)O, generating O(2) and a proton gradient subsequently used for ATP formation. It consists of a core antenna complex that captures photons, and an electron transfer chain that converts photonic excitation into a charge separation. The protein is Cytochrome b559 subunit beta of Spinacia oleracea (Spinach).